A 155-amino-acid chain; its full sequence is SsrA-binding protein (155 aa).

The protein belongs to the SmpB family.

It localises to the cytoplasm. Functionally, required for rescue of stalled ribosomes mediated by trans-translation. Binds to transfer-messenger RNA (tmRNA), required for stable association of tmRNA with ribosomes. tmRNA and SmpB together mimic tRNA shape, replacing the anticodon stem-loop with SmpB. tmRNA is encoded by the ssrA gene; the 2 termini fold to resemble tRNA(Ala) and it encodes a 'tag peptide', a short internal open reading frame. During trans-translation Ala-aminoacylated tmRNA acts like a tRNA, entering the A-site of stalled ribosomes, displacing the stalled mRNA. The ribosome then switches to translate the ORF on the tmRNA; the nascent peptide is terminated with the 'tag peptide' encoded by the tmRNA and targeted for degradation. The ribosome is freed to recommence translation, which seems to be the essential function of trans-translation. The sequence is that of SsrA-binding protein from Bacillus mycoides (strain KBAB4) (Bacillus weihenstephanensis).